Reading from the N-terminus, the 360-residue chain is Alpha-methylacyl-CoA racemase (360 aa).

Substrate contacts are provided by residues Arg-38, 59–62 (ADLK), 83–85 (GYR), Arg-91, and 125–130 (GHDINY). The active-site Proton acceptor is the His-126. The active-site Proton donor is Asp-156.

It belongs to the CoA-transferase III family. In terms of assembly, homodimer.

The enzyme catalyses a (2S)-2-methylacyl-CoA = a (2R)-2-methylacyl-CoA. It carries out the reaction (2S)-2-methyltetradecanoyl-CoA = (2R)-2-methyltetradecanoyl-CoA. The catalysed reaction is (2R)-pristanoyl-CoA = (2S)-pristanoyl-CoA. It catalyses the reaction (25S)-3-oxocholest-4-en-26-oyl-CoA = (25R)-3-oxocholest-4-en-26-oyl-CoA. The enzyme catalyses (2S)-ibuprofenoyl-CoA = (2R)-ibuprofenoyl-CoA. With respect to regulation, inactivated by N,N-dialkylcarbamoyl-CoA substrate-product analogs. Catalyzes the epimerization of (2R)- and (2S)-methylacyl-coenzyme A (CoA) thioesters. Accepts as substrates a wide range of alpha-methylacyl-CoAs, including (2R)-2-methylmyristoyl-CoA and (2S)-2-methylmyristoyl-CoA, (2R)-pristanoyl-CoA and (2S)-pristanoyl-CoA, and the cholesterol esters (25R)-3-oxo-cholest-4-en-26-oyl-CoA and (25S)-3-oxo-cholest-4-en-26-oyl-CoA. Can also catalyze the interconversion of the non-physiologic substrates (2R)-ibuprofenoyl-CoA and (2S)-ibuprofenoyl-CoA, which are potential competitive inhibitors of the enzyme. The protein is Alpha-methylacyl-CoA racemase of Mycobacterium tuberculosis (strain ATCC 25618 / H37Rv).